Reading from the N-terminus, the 654-residue chain is MKDPQSPNESFDIIVIGGGHAGCEAAITTAKLGFSTALFTINLDRIAWQPCNPAVGGPAKSQLVHEIDALGGIIGQLADETAIQKRILNASRGPAVWALRAQTDKREYSKRMIEILQNTDNLSLKEAMITELVIKEAETFSNNLKNKTKKIKGVKTFFGTYYYAKSIIITAGTFLEGRIWIGNKSMSAGRSGEQAAQGLTQSLHNLGIKTERLKTGTPARVDKKSISFDELDIQPSTASDKYFSFDPKIKNNMPQVSCHITRTTLKTHELIRNNLHLTPIYGGFIDSKGPRYCPSIEDKIVKFADKNSHQIFLEPEGINTPEIYVQGFSTGLPENIQLDLLRTLPGLNKCKMLRPAYAVEYEYIPATQLKSSLETIEIENLFSAGQINGTTGYEEAAAQGLVAGINATRKLNMKDPIIFSRESSYIGTMINDLITRDLKEPYRVLTSRSEYRLTLRGDNADRRLTPLGFEIGLIDERRWLAHKKKMKSLKEENSRLENTRLKCTDEIAKKIELDSGSKIKGSTTLKELLKRPNLHYSDFIRYDLVDKTLPISVIEGVEIDIKYEGYLKRQKNNIDQINRQSLKSLSSEINYDQIDTLSLEARENLNKIKPTNFGDASKIPGVSKADLTALLVWLKIKELKNEKKTSFAEKKLSS.

17 to 22 (GGGHAG) contacts FAD. Residue 289 to 303 (GPRYCPSIEDKIVKF) coordinates NAD(+).

The protein belongs to the MnmG family. As to quaternary structure, homodimer. Heterotetramer of two MnmE and two MnmG subunits. The cofactor is FAD.

Its subcellular location is the cytoplasm. Its function is as follows. NAD-binding protein involved in the addition of a carboxymethylaminomethyl (cmnm) group at the wobble position (U34) of certain tRNAs, forming tRNA-cmnm(5)s(2)U34. The chain is tRNA uridine 5-carboxymethylaminomethyl modification enzyme MnmG from Prochlorococcus marinus subsp. pastoris (strain CCMP1986 / NIES-2087 / MED4).